The following is a 469-amino-acid chain: UDP-N-acetylmuramate--L-alanine ligase (469 aa).

113 to 119 contacts ATP; it reads GSHGKTT.

Belongs to the MurCDEF family.

The protein resides in the cytoplasm. The enzyme catalyses UDP-N-acetyl-alpha-D-muramate + L-alanine + ATP = UDP-N-acetyl-alpha-D-muramoyl-L-alanine + ADP + phosphate + H(+). Its pathway is cell wall biogenesis; peptidoglycan biosynthesis. Cell wall formation. This chain is UDP-N-acetylmuramate--L-alanine ligase, found in Sorangium cellulosum (strain So ce56) (Polyangium cellulosum (strain So ce56)).